A 518-amino-acid chain; its full sequence is Retinal dehydrogenase 2 (518 aa).

NAD(+) is bound by residues 184-186 (IPW), 210-213 (KPAE), and 264-266 (STE). E286 functions as the Proton acceptor in the catalytic mechanism. The active-site Nucleophile is the C320. Residues 366 to 370 (KQYNK) and E417 each bind NAD(+).

The protein belongs to the aldehyde dehydrogenase family. Homotetramer.

The protein localises to the cytoplasm. The catalysed reaction is retinal + NAD(+) + H2O = retinoate + NADH + 2 H(+). It catalyses the reaction all-trans-retinal + NAD(+) + H2O = all-trans-retinoate + NADH + 2 H(+). It carries out the reaction all-trans-13,14-dihydroretinal + NAD(+) + H2O = all-trans-13,14-dihydroretinoate + NADH + 2 H(+). The protein operates within cofactor metabolism; retinol metabolism. Functionally, catalyzes the NAD-dependent oxidation of aldehyde substrates, such as all-trans-retinal and all-trans-13,14-dihydroretinal, to their corresponding carboxylic acids, all-trans-retinoate and all-trans-13,14-dihydroretinoate, respectively. Retinoate signaling is critical for the transcriptional control of many genes, for instance it is crucial for initiation of meiosis in both male and female. Recognizes retinal as substrate, both in its free form and when bound to cellular retinol-binding protein. Lacks activity with benzaldehyde, acetaldehyde and octanal. Displays complete lack of activity with citral. The protein is Retinal dehydrogenase 2 (ALDH1A2) of Gallus gallus (Chicken).